The chain runs to 414 residues: MDFVKELKSSQDYMNNELTYGAHNYDPIPVVLKRGKGVFVYDIEDRRYYDFLSAYSSVNQGHCHPDILNAMINQAKKLTICSRAFFSDSLGVCERYLTNLFGYDKVLMMNTGAEASETAYKLCRKWGYEVKKIPENSAKIIVCNNNFSGRTLGCVSASTDKKCKNNFGPFVPNFLKVPYDDLEALEKELQDPNVCAFIVEPVQGEAGVIVPSDSYFPGVASLCKKYNVLFVADEVQTGLGRTGKLLCTHHYGVKPDVILLGKALSGGHYPISAILANDDVMLVLKPGEHGSTYGGNPLAAAICVEALKVLINEKLCENADKLGAPFLQNLKEQLKDSKVVREVRGKGLLCAIEFKNDLVNVWDICLKFKENGLITRSVHDKTVRLTPPLCITKEQLDECTEIIVKTVKFFDDNL.

A disulfide bond links Cys154 and Cys163. Lys262 carries the post-translational modification N6-(pyridoxal phosphate)lysine.

The protein belongs to the class-III pyridoxal-phosphate-dependent aminotransferase family. In terms of assembly, homodimer. Pyridoxal 5'-phosphate is required as a cofactor. The disulfide bond between Cys-154 and Cys-163 is reduced by TRX1 which increases OAT catalytic activity.

Its subcellular location is the cytoplasm. The enzyme catalyses a 2-oxocarboxylate + L-ornithine = L-glutamate 5-semialdehyde + an L-alpha-amino acid. It catalyses the reaction L-ornithine + 2-oxoglutarate = L-glutamate 5-semialdehyde + L-glutamate. The protein operates within amino-acid biosynthesis; L-proline biosynthesis; L-glutamate 5-semialdehyde from L-ornithine: step 1/1. Its activity is regulated as follows. Unlike for mammalian OATs, activity is increased by TRX1-mediated reduction of the disulfide bond between Cys-154 and Cys-163. Binding to TRX1 may also induce conformational changes that facilitate substrate binding. Functionally, the enzyme has a very narrow substrate specificity and can only catalyze the transamination of alpha-ketoglutarate with ornithine or N-acetylornithine and, to a lesser extent, of glutamate-5-semialdehyde with glutamate and alanine. This chain is Ornithine aminotransferase, found in Plasmodium falciparum (isolate 3D7).